Reading from the N-terminus, the 356-residue chain is Alanine racemase (356 aa).

The Proton acceptor; specific for D-alanine role is filled by Lys-35. Lys-35 carries the post-translational modification N6-(pyridoxal phosphate)lysine. Arg-130 serves as a coordination point for substrate. Tyr-253 acts as the Proton acceptor; specific for L-alanine in catalysis. Position 301 (Met-301) interacts with substrate.

The protein belongs to the alanine racemase family. Requires pyridoxal 5'-phosphate as cofactor.

The enzyme catalyses L-alanine = D-alanine. Its pathway is amino-acid biosynthesis; D-alanine biosynthesis; D-alanine from L-alanine: step 1/1. Catalyzes the interconversion of L-alanine and D-alanine. May also act on other amino acids. The polypeptide is Alanine racemase (alr) (Paraburkholderia phytofirmans (strain DSM 17436 / LMG 22146 / PsJN) (Burkholderia phytofirmans)).